The following is a 150-amino-acid chain: Suppressor of HU sensitivity involved in recombination protein 1 (150 aa).

Component of the SHU complex composed of at least CSM2, PSY3, SHU1 and SHU2.

The protein resides in the nucleus. In terms of biological role, plays a role in a RAD51/RAD54-dependent homologous recombination repair (HRR) pathway to repair MMS-induced lesions during S-phase. In Saccharomyces cerevisiae (strain ATCC 204508 / S288c) (Baker's yeast), this protein is Suppressor of HU sensitivity involved in recombination protein 1 (SHU1).